Consider the following 47-residue polypeptide: Large ribosomal subunit protein bL34 (47 aa).

Belongs to the bacterial ribosomal protein bL34 family.

This is Large ribosomal subunit protein bL34 from Mycobacteroides abscessus (strain ATCC 19977 / DSM 44196 / CCUG 20993 / CIP 104536 / JCM 13569 / NCTC 13031 / TMC 1543 / L948) (Mycobacterium abscessus).